Here is a 74-residue protein sequence, read N- to C-terminus: uncharacterized protein (74 aa).

A coiled-coil region spans residues 25-62 (QQTIDRLAGLELRMKQLIRAIEVNNELLRTMQEQQNRV).

This is an uncharacterized protein from Bacillus subtilis (strain 168).